The primary structure comprises 520 residues: DDB1- and CUL4-associated factor 17 (520 aa).

2 consecutive transmembrane segments (helical) span residues Val-186–Ile-206 and Gly-222–Ala-242.

Interacts with DDB1, CUL4A and CUL4B. As to expression, ubiquitously expressed.

The protein localises to the membrane. The protein resides in the nucleus. Its subcellular location is the nucleolus. It functions in the pathway protein modification; protein ubiquitination. Its function is as follows. May function as a substrate receptor for CUL4-DDB1 E3 ubiquitin-protein ligase complex. The polypeptide is DDB1- and CUL4-associated factor 17 (DCAF17) (Homo sapiens (Human)).